Consider the following 657-residue polypeptide: Glycogen debranching enzyme (657 aa).

Catalysis depends on D336, which acts as the Nucleophile. Catalysis depends on E371, which acts as the Proton donor. Residues 460-479 form a disordered region; that stretch reads ANGEENRDGTNNNYSNNHGK.

Belongs to the glycosyl hydrolase 13 family.

The enzyme catalyses Hydrolysis of (1-&gt;6)-alpha-D-glucosidic linkages to branches with degrees of polymerization of three or four glucose residues in limit dextrin.. Its pathway is glycan degradation; glycogen degradation. Functionally, removes maltotriose and maltotetraose chains that are attached by 1,6-alpha-linkage to the limit dextrin main chain, generating a debranched limit dextrin. In Escherichia coli O127:H6 (strain E2348/69 / EPEC), this protein is Glycogen debranching enzyme.